Reading from the N-terminus, the 457-residue chain is Phosphomethylpyrimidine synthase (457 aa).

Substrate is bound by residues N80, M109, Y139, H175, 195–197 (SRG), 236–239 (DSLR), and E275. Position 279 (H279) interacts with Zn(2+). Substrate is bound at residue Y302. A Zn(2+)-binding site is contributed by H343. 3 residues coordinate [4Fe-4S] cluster: C423, C426, and C431.

Belongs to the ThiC family. It depends on [4Fe-4S] cluster as a cofactor.

It carries out the reaction 5-amino-1-(5-phospho-beta-D-ribosyl)imidazole + S-adenosyl-L-methionine = 4-amino-2-methyl-5-(phosphooxymethyl)pyrimidine + CO + 5'-deoxyadenosine + formate + L-methionine + 3 H(+). The protein operates within cofactor biosynthesis; thiamine diphosphate biosynthesis. Functionally, catalyzes the synthesis of the hydroxymethylpyrimidine phosphate (HMP-P) moiety of thiamine from aminoimidazole ribotide (AIR) in a radical S-adenosyl-L-methionine (SAM)-dependent reaction. This Nostoc punctiforme (strain ATCC 29133 / PCC 73102) protein is Phosphomethylpyrimidine synthase.